Consider the following 154-residue polypeptide: Cyanate hydratase (154 aa).

Catalysis depends on residues Arg100, Glu103, and Ser126.

Belongs to the cyanase family.

The catalysed reaction is cyanate + hydrogencarbonate + 3 H(+) = NH4(+) + 2 CO2. Functionally, catalyzes the reaction of cyanate with bicarbonate to produce ammonia and carbon dioxide. The sequence is that of Cyanate hydratase from Aspergillus fumigatus (strain ATCC MYA-4609 / CBS 101355 / FGSC A1100 / Af293) (Neosartorya fumigata).